We begin with the raw amino-acid sequence, 296 residues long: Formamidopyrimidine-DNA glycosylase (296 aa).

Residue Pro2 is the Schiff-base intermediate with DNA of the active site. Glu3 acts as the Proton donor in catalysis. The active-site Proton donor; for beta-elimination activity is Lys58. Residues His106, Arg125, and Lys168 each coordinate DNA. An FPG-type zinc finger spans residues Arg259–Val295. The active-site Proton donor; for delta-elimination activity is the Arg285.

This sequence belongs to the FPG family. In terms of assembly, monomer. Zn(2+) serves as cofactor.

It carries out the reaction Hydrolysis of DNA containing ring-opened 7-methylguanine residues, releasing 2,6-diamino-4-hydroxy-5-(N-methyl)formamidopyrimidine.. The catalysed reaction is 2'-deoxyribonucleotide-(2'-deoxyribose 5'-phosphate)-2'-deoxyribonucleotide-DNA = a 3'-end 2'-deoxyribonucleotide-(2,3-dehydro-2,3-deoxyribose 5'-phosphate)-DNA + a 5'-end 5'-phospho-2'-deoxyribonucleoside-DNA + H(+). Its function is as follows. Involved in base excision repair of DNA damaged by oxidation or by mutagenic agents. Acts as a DNA glycosylase that recognizes and removes damaged bases. Has a preference for oxidized purines, such as 7,8-dihydro-8-oxoguanine (8-oxoG). Has AP (apurinic/apyrimidinic) lyase activity and introduces nicks in the DNA strand. Cleaves the DNA backbone by beta-delta elimination to generate a single-strand break at the site of the removed base with both 3'- and 5'-phosphates. The chain is Formamidopyrimidine-DNA glycosylase from Methylorubrum populi (strain ATCC BAA-705 / NCIMB 13946 / BJ001) (Methylobacterium populi).